Consider the following 882-residue polypeptide: Valine--tRNA ligase (882 aa).

The short motif at 42–52 is the 'HIGH' region element; it reads PNVTGKLHLGH. Positions 522–526 match the 'KMSKS' region motif; the sequence is KMSKS. An ATP-binding site is contributed by Lys525. Positions 849 to 873 form a coiled coil; that stretch reads KIEIEKKKYESYCKQYKKLLESKNN.

This sequence belongs to the class-I aminoacyl-tRNA synthetase family. ValS type 1 subfamily. As to quaternary structure, monomer.

The protein resides in the cytoplasm. The catalysed reaction is tRNA(Val) + L-valine + ATP = L-valyl-tRNA(Val) + AMP + diphosphate. In terms of biological role, catalyzes the attachment of valine to tRNA(Val). As ValRS can inadvertently accommodate and process structurally similar amino acids such as threonine, to avoid such errors, it has a 'posttransfer' editing activity that hydrolyzes mischarged Thr-tRNA(Val) in a tRNA-dependent manner. The protein is Valine--tRNA ligase of Onion yellows phytoplasma (strain OY-M).